A 252-amino-acid polypeptide reads, in one-letter code: Ubiquinone biosynthesis protein COQ4 homolog 1, mitochondrial (252 aa).

Residues His-130, Asp-131, His-134, and Glu-146 each contribute to the Zn(2+) site.

This sequence belongs to the COQ4 family. Component of a multi-subunit COQ enzyme complex. Zn(2+) serves as cofactor.

The protein resides in the mitochondrion inner membrane. The catalysed reaction is a 4-hydroxy-3-methoxy-5-(all-trans-polyprenyl)benzoate + H(+) = a 2-methoxy-6-(all-trans-polyprenyl)phenol + CO2. It functions in the pathway cofactor biosynthesis; ubiquinone biosynthesis. In terms of biological role, lyase that catalyzes the C1-decarboxylation of 4-hydroxy-3-methoxy-5-(all-trans-polyprenyl)benzoic acid into 2-methoxy-6-(all-trans-polyprenyl)phenol during ubiquinone biosynthesis. The chain is Ubiquinone biosynthesis protein COQ4 homolog 1, mitochondrial from Trypanosoma cruzi (strain CL Brener).